The following is a 308-amino-acid chain: Autophagy-related protein 3 (308 aa).

The tract at residues 83–159 (NFVETQTTET…NELADDDDDI (77 aa)) is flexible region. The tract at residues 89–121 (TTETRDVGDGWELEGQSEGERESGREDTKSNEE) is disordered. A compositionally biased stretch (basic and acidic residues) spans 106 to 120 (EGERESGREDTKSNE). The active-site Glycyl thioester intermediate is the Cys235. The tract at residues 239–283 (NVMKVLMEKVRASRHRARDTEAQKNAEEDWEDLQSDIDDGLRVDQ) is handle region.

This sequence belongs to the ATG3 family. Monomer. Interacts with ATG8 through an intermediate thioester bond between Cys-235 and the C-terminal Gly of ATG8. Interacts with the C-terminal region of the E1-like ATG7 enzyme. Also interacts with the ATG12-ATG5 conjugate.

The protein localises to the cytoplasm. Its function is as follows. E2 conjugating enzyme required for the cytoplasm to vacuole transport (Cvt) and autophagy. Required for selective autophagic degradation of the nucleus (nucleophagy) as well as for mitophagy which contributes to regulate mitochondrial quantity and quality by eliminating the mitochondria to a basal level to fulfill cellular energy requirements and preventing excess ROS production. Responsible for the E2-like covalent binding of phosphatidylethanolamine to the C-terminal Gly of ATG8. The ATG12-ATG5 conjugate plays a role of an E3 and promotes the transfer of ATG8 from ATG3 to phosphatidylethanolamine (PE). This step is required for the membrane association of ATG8. The formation of the ATG8-phosphatidylethanolamine conjugate is essential for autophagy and for the cytoplasm to vacuole transport (Cvt). The ATG8-PE conjugate mediates tethering between adjacent membranes and stimulates membrane hemifusion, leading to expansion of the autophagosomal membrane during autophagy. The protein is Autophagy-related protein 3 of Kluyveromyces marxianus (strain DMKU3-1042 / BCC 29191 / NBRC 104275) (Yeast).